Here is a 450-residue protein sequence, read N- to C-terminus: Protein tweety homolog 1 (450 aa).

Over 1–43 (MGAPPGYRPSAWVHLLHQLPRADFQLRPVPSGFAPQEQEYQQA) the chain is Extracellular. Residues 44-64 (LLLVAALAGLGLGLSLIFIAV) form a helical membrane-spanning segment. Residues 65–88 (YLIRFCCCRPPEPPGSKTPSPGGG) are Cytoplasmic-facing. A helical transmembrane segment spans residues 89 to 109 (CVTWSCIVALLAGCIGIGIGF). Residues 110 to 214 (YGNSETSDGV…DVSFVEEYRW (105 aa)) lie on the Extracellular side of the membrane. A glycan (N-linked (GlcNAc...) asparagine) is linked at asparagine 130. A helical membrane pass occupies residues 215-235 (LAYVLLLLLELLVCLFTLLGL). Topologically, residues 236 to 240 (AKQSK) are cytoplasmic. A helical transmembrane segment spans residues 241-261 (WLVIVMTVMSLLVLVLSWGSM). Residues 262–390 (GLEAATAVGL…LRGLCEDALE (129 aa)) lie on the Extracellular side of the membrane. 2 N-linked (GlcNAc...) asparagine glycosylation sites follow: asparagine 284 and asparagine 355. Cysteines 303 and 370 form a disulfide. Residues 391–411 (GLLFLLLFSLLSAGALATALC) form a helical membrane-spanning segment. Over 412–450 (SLPRAWALFPPSDDYDDTDDDDPFNPQESKRFVQWQSSI) the chain is Cytoplasmic. Residues 428-450 (DTDDDDPFNPQESKRFVQWQSSI) form a disordered region. Serine 440 is modified (phosphoserine).

This sequence belongs to the tweety family. Homotetramer; disulfide-linked. Homodimer. Post-translationally, N-glycosylated. Contains high-mannose, hybrid and complex oligosaccharides.

Its subcellular location is the cell membrane. The enzyme catalyses chloride(in) = chloride(out). It carries out the reaction L-glutamate(out) = L-glutamate(in). Its function is as follows. Calcium-independent, swelling-dependent volume-regulated anion channel (VRAC-swell) which plays a pivotal role in the process of regulatory volume decrease (RVD) in the brain through the efflux of anions like chloride and organic osmolytes like glutamate. This Macaca fascicularis (Crab-eating macaque) protein is Protein tweety homolog 1 (TTYH1).